We begin with the raw amino-acid sequence, 1240 residues long: DNA-directed RNA polymerase subunit beta (1240 aa).

Belongs to the RNA polymerase beta chain family. As to quaternary structure, the RNAP catalytic core consists of 2 alpha, 1 beta, 1 beta' and 1 omega subunit. When a sigma factor is associated with the core the holoenzyme is formed, which can initiate transcription.

It catalyses the reaction RNA(n) + a ribonucleoside 5'-triphosphate = RNA(n+1) + diphosphate. Functionally, DNA-dependent RNA polymerase catalyzes the transcription of DNA into RNA using the four ribonucleoside triphosphates as substrates. The protein is DNA-directed RNA polymerase subunit beta of Phytoplasma australiense.